The following is a 44-amino-acid chain: Photosystem I reaction center subunit IX (44 aa).

A helical membrane pass occupies residues 7–27 (YLSVAPVLSTLWFGALAGLLI).

It belongs to the PsaJ family.

It localises to the plastid. The protein resides in the chloroplast thylakoid membrane. Its function is as follows. May help in the organization of the PsaE and PsaF subunits. The protein is Photosystem I reaction center subunit IX of Solanum bulbocastanum (Wild potato).